Here is a 375-residue protein sequence, read N- to C-terminus: Acyl-coenzyme A diphosphatase NUDT19 (375 aa).

The Nudix hydrolase domain maps to 15-263 (AASIVLAAGW…IWLPPPQFYE (249 aa)). Positions 91 to 116 (LGPAPFSRTAFPSLPDTDDHKTDNTG) are disordered. Positions 116 to 137 (GTLPEDVAFRICAVREAFEEAG) match the Nudix box motif. Mg(2+)-binding residues include Glu-131 and Glu-135. The Microbody targeting signal motif lies at 373-375 (SHL).

The protein belongs to the Nudix hydrolase family. In terms of assembly, monomer. The cofactor is Mg(2+). Mn(2+) is required as a cofactor.

The protein resides in the peroxisome. It catalyses the reaction an acyl-CoA + H2O = an acyl-4'-phosphopantetheine + adenosine 3',5'-bisphosphate + 2 H(+). It carries out the reaction CoA + H2O = (R)-4'-phosphopantetheine + adenosine 3',5'-bisphosphate + 2 H(+). The enzyme catalyses hexanoyl-CoA + H2O = hexanoyl-4'-phosphopantetheine + adenosine 3',5'-bisphosphate + 2 H(+). The catalysed reaction is octanoyl-CoA + H2O = S-octanoyl-4'-phosphopantetheine + adenosine 3',5'-bisphosphate + 2 H(+). It catalyses the reaction butanoyl-CoA + H2O = S-butanoyl-4'-phosphopantetheine + adenosine 3',5'-bisphosphate + 2 H(+). It carries out the reaction propanoyl-CoA + H2O = propanoyl-4'-phosphopantetheine + adenosine 3',5'-bisphosphate + 2 H(+). The enzyme catalyses malonyl-CoA + H2O = malonyl-4'-phosphopantetheine + adenosine 3',5'-bisphosphate + 2 H(+). The catalysed reaction is succinyl-CoA + H2O = succinyl-4'-phosphopantetheine + adenosine 3',5'-bisphosphate + 2 H(+). It catalyses the reaction choloyl-CoA + H2O = S-choloyl-4'-phosphopantetheine + adenosine 3',5'-bisphosphate + 2 H(+). It carries out the reaction 4,8-dimethylnonanoyl-CoA + H2O = S-(4,8-dimethylnonanoyl)-4'-phosphopantetheine + adenosine 3',5'-bisphosphate + 2 H(+). The enzyme catalyses (9Z,12Z,15Z)-octadecatrienoyl-CoA + H2O = S-(9Z,12Z,15Z-octadecatrienoyl)-4'-phosphopantetheine + adenosine 3',5'-bisphosphate + 2 H(+). The catalysed reaction is (9Z,12Z)-octadecadienoyl-CoA + H2O = S-(9Z,12Z-octadecadienoyl)-4'-phosphopantetheine + adenosine 3',5'-bisphosphate + 2 H(+). It catalyses the reaction (9Z)-hexadecenoyl-CoA + H2O = S-(9Z-hexadecenoyl)-4'-phosphopantetheine + adenosine 3',5'-bisphosphate + 2 H(+). It carries out the reaction (9Z)-tetradecenoyl-CoA + H2O = S-(9Z-tetradecenoyl)-4'-phosphopantetheine + adenosine 3',5'-bisphosphate + 2 H(+). The enzyme catalyses (6Z)-octenoyl-CoA + H2O = S-(6Z-octenoyl)-4'-phosphopantetheine + adenosine 3',5'-bisphosphate + 2 H(+). The catalysed reaction is hexadecanoyl-CoA + H2O = S-hexadecanoyl-4'-phosphopantetheine + adenosine 3',5'-bisphosphate + 2 H(+). It catalyses the reaction tetradecanoyl-CoA + H2O = tetradecanoyl-4'-phosphopantetheine + adenosine 3',5'-bisphosphate + 2 H(+). It carries out the reaction dodecanoyl-CoA + H2O = S-dodecanoyl-4'-phosphopantetheine + adenosine 3',5'-bisphosphate + 2 H(+). The enzyme catalyses a 5'-end CoA-ribonucleoside in mRNA + H2O = a 5'-end phospho-adenosine-phospho-ribonucleoside in mRNA + (R)-4'-phosphopantetheine + 2 H(+). In terms of biological role, fatty acyl-coenzyme A (CoA) diphosphatase that hydrolyzes fatty acyl-CoA to yield acyl-4'-phosphopantetheine and adenosine 3',5'-bisphosphate. Mediates the hydrolysis of a wide range of CoA esters, including choloyl-CoA and branched-chain fatty-acyl-CoA esters and at low substrate concentrations medium and long-chain fatty-acyl-CoA esters are the primary substrates. Highest activity seen with medium-chain acyl-CoA esters and higher rates of activity seen with the unsaturated acyl-CoA esters compared with the saturated esters. Exhibits decapping activity towards dpCoA-capped RNAs in vitro. This chain is Acyl-coenzyme A diphosphatase NUDT19 (NUDT19), found in Homo sapiens (Human).